A 363-amino-acid polypeptide reads, in one-letter code: MFKRHKSLASERKRALLSQRATRFILKDDMRNFHFLSKLVLSAGPLRPTPAVKHSKTTHFEIEIFDAQTRKQICILDKVTQSSTIHDVKQKFHKACPKWYPSRVGLQLECGGPFLKDYITIQSIAASSIVTLYATDLGQQVSWTTVFLAEYTGPLLIYLLFYLRIPCIYDGKESARRLRHPVVHLACFCHCIHYIRYLLETLFVHKVSAGHTPLKNLIMSCAFYWGFTSWIAYYINHPLYTPPSFGNRQITVSAINFLICEAGNHFINVMLSHPNHTGNNACFPSPNYNPFTWMFFLVSCPNYTYEIGSWISFTVMTQTLPVGIFTLLMSIQMSLWAQKKHKIYLRKFNSYIHRKSAMIPFIL.

Position 37 is a phosphoserine (Ser-37). A run of 3 helical transmembrane segments spans residues 143–163, 217–237, and 311–331; these read WTTV…LFYL, LIMS…YINH, and ISFT…LMSI.

This sequence belongs to the steroid 5-alpha reductase family. Predominantly expressed in the heart and skeletal muscle.

Its subcellular location is the membrane. It localises to the endoplasmic reticulum. The sequence is that of Trans-2,3-enoyl-CoA reductase-like (TECRL) from Homo sapiens (Human).